We begin with the raw amino-acid sequence, 219 residues long: RPA-interacting protein (219 aa).

Position 18 is a phosphoserine (serine 18). The segment at 137 to 212 (CPVCIKYNLR…PSLLMNCLTC (76 aa)) adopts an RIP-type zinc-finger fold. Residues 164–180 (STDLTEQKLRACLEENV) are mediates nuclear export.

Interacts with the RPA1 subunit of RPA complex. Post-translationally, sumoylated; required for localization in the nuclear PML body and transport of RPA complex in PML body. Upon UV irradiation and during S phase, it is desumoylated, releasing RPA complex that is translocated to sites of DNA damage. Sumoylation takes place at different Lys residues.

Its subcellular location is the nucleus. Mediates the import of RPA complex into the nucleus, possibly via some interaction with importin beta. Sumoylation mediates the localization of RPA complex into the PML body of the nucleus, thereby participating in RPA function in DNA metabolism. The protein is RPA-interacting protein (Rpain) of Mus musculus (Mouse).